Here is a 335-residue protein sequence, read N- to C-terminus: Glutamyl-tRNA reductase (335 aa).

Residues Thr-60 to Arg-63, Ser-110, Glu-115 to Glu-117, and Gln-121 each bind substrate. Cys-61 functions as the Nucleophile in the catalytic mechanism. Residue Gly-189–Asn-194 coordinates NADP(+).

It belongs to the glutamyl-tRNA reductase family. As to quaternary structure, homodimer.

It catalyses the reaction (S)-4-amino-5-oxopentanoate + tRNA(Glu) + NADP(+) = L-glutamyl-tRNA(Glu) + NADPH + H(+). It participates in porphyrin-containing compound metabolism; protoporphyrin-IX biosynthesis; 5-aminolevulinate from L-glutamyl-tRNA(Glu): step 1/2. Catalyzes the NADPH-dependent reduction of glutamyl-tRNA(Glu) to glutamate 1-semialdehyde (GSA). The chain is Glutamyl-tRNA reductase from Chlamydia trachomatis serovar A (strain ATCC VR-571B / DSM 19440 / HAR-13).